The sequence spans 64 residues: Cytochrome b-c1 complex subunit 9 (64 aa).

Residues 2–21 (VAPTLTARLYSLLFRRTSTF) are Mitochondrial matrix-facing. The chain crosses the membrane as a helical span at residues 22 to 47 (ALTIVVGALFFERAFDQGADAIYEHI). The Mitochondrial intermembrane segment spans residues 48 to 64 (NEGKLWKHIKHKYENKE).

This sequence belongs to the UQCR10/QCR9 family. In terms of assembly, component of the ubiquinol-cytochrome c oxidoreductase (cytochrome b-c1 complex, complex III, CIII), a multisubunit enzyme composed of 11 subunits. The complex is composed of 3 respiratory subunits cytochrome b, cytochrome c1 and Rieske protein UQCRFS1, 2 core protein subunits UQCRC1/QCR1 and UQCRC2/QCR2, and 6 low-molecular weight protein subunits UQCRH/QCR6, UQCRB/QCR7, UQCRQ/QCR8, UQCR10/QCR9, UQCR11/QCR10 and subunit 9, the cleavage product of Rieske protein UQCRFS1. The complex exists as an obligatory dimer and forms supercomplexes (SCs) in the inner mitochondrial membrane with NADH-ubiquinone oxidoreductase (complex I, CI) and cytochrome c oxidase (complex IV, CIV), resulting in different assemblies (supercomplex SCI(1)III(2)IV(1) and megacomplex MCI(2)III(2)IV(2)). Interacts with STMP1.

It localises to the mitochondrion inner membrane. Its function is as follows. Component of the ubiquinol-cytochrome c oxidoreductase, a multisubunit transmembrane complex that is part of the mitochondrial electron transport chain which drives oxidative phosphorylation. The respiratory chain contains 3 multisubunit complexes succinate dehydrogenase (complex II, CII), ubiquinol-cytochrome c oxidoreductase (cytochrome b-c1 complex, complex III, CIII) and cytochrome c oxidase (complex IV, CIV), that cooperate to transfer electrons derived from NADH and succinate to molecular oxygen, creating an electrochemical gradient over the inner membrane that drives transmembrane transport and the ATP synthase. The cytochrome b-c1 complex catalyzes electron transfer from ubiquinol to cytochrome c, linking this redox reaction to translocation of protons across the mitochondrial inner membrane, with protons being carried across the membrane as hydrogens on the quinol. In the process called Q cycle, 2 protons are consumed from the matrix, 4 protons are released into the intermembrane space and 2 electrons are passed to cytochrome c. This is Cytochrome b-c1 complex subunit 9 (UQCR10) from Bos taurus (Bovine).